The following is a 306-amino-acid chain: Non-structural protein 3 (306 aa).

This Banna virus (BAV) protein is Non-structural protein 3 (Segment-7).